We begin with the raw amino-acid sequence, 462 residues long: Zinc transporter zipt-7.2 (462 aa).

Residues 2-22 (LVKSCIFLSFLAIAAYGQAHL) form a helical membrane-spanning segment. Residues 39–134 (HHQGHGHAHG…HGHSHGAESA (96 aa)) are disordered. Residues 40-51 (HQGHGHAHGGHG) are compositionally biased toward basic residues. Over residues 65-74 (AAAAEAATAA) the composition is skewed to low complexity. Residues 75–94 (AHDHGHAHDHDHGHAHDHGH) show a composition bias toward basic and acidic residues. Residues 111–120 (HGHAHDHHGH) show a composition bias toward basic residues. Over residues 121–132 (SHEDHGHSHGAE) the composition is skewed to basic and acidic residues. A helical transmembrane segment spans residues 161 to 181 (AISATLLISAAPCFILMFIPI). The N-linked (GlcNAc...) asparagine glycan is linked to N184. A helical transmembrane segment spans residues 194 to 214 (VLLAFGSGGLLGDAFLHLIPH). Residues 219-239 (GDGHGHSHSHGHSHGGGGHSH) form a disordered region. The helical transmembrane segment at 244–264 (MSVGGWVLGGIIAFLTVEKLV) threads the bilayer. Residues 270–307 (EDGHGHSHGHSHGGEKKETKEKDSKDKVAKKEEKPEKD) are disordered. The span at 281–307 (HGGEKKETKEKDSKDKVAKKEEKPEKD) shows a compositional bias: basic and acidic residues. N326 carries N-linked (GlcNAc...) asparagine glycosylation. 3 helical membrane passes run 333–353 (IGASFIAGTTVGIVTMITVLV), 376–396 (AMLIQLVTALGALSGCVISLF), and 410–430 (SWVLPFTAGGFIYIATVSVIP). N435 carries N-linked (GlcNAc...) asparagine glycosylation. A helical membrane pass occupies residues 441-461 (TVKEIFAILTGIFLMYLIAIY).

Belongs to the ZIP transporter (TC 2.A.5) family. KE4/Catsup subfamily. As to expression, expressed in somatic tissues.

It is found in the membrane. Its function is as follows. Zinc transporter. This is Zinc transporter zipt-7.2 from Caenorhabditis elegans.